Reading from the N-terminus, the 405-residue chain is Argininosuccinate synthase (405 aa).

ATP is bound by residues 10 to 18 (AYSGGLDTS) and Ala37. The L-citrulline site is built by Tyr88 and Ser93. Gly118 contributes to the ATP binding site. Positions 120, 124, and 125 each coordinate L-aspartate. Asn124 provides a ligand contact to L-citrulline. L-citrulline contacts are provided by Arg128, Ser179, Ser188, Glu264, and Tyr276.

This sequence belongs to the argininosuccinate synthase family. Type 1 subfamily. In terms of assembly, homotetramer.

The protein resides in the cytoplasm. It carries out the reaction L-citrulline + L-aspartate + ATP = 2-(N(omega)-L-arginino)succinate + AMP + diphosphate + H(+). Its pathway is amino-acid biosynthesis; L-arginine biosynthesis; L-arginine from L-ornithine and carbamoyl phosphate: step 2/3. This chain is Argininosuccinate synthase, found in Pseudomonas putida (strain GB-1).